Here is a 388-residue protein sequence, read N- to C-terminus: Spermidine/putrescine import ATP-binding protein PotA (388 aa).

The ABC transporter domain occupies isoleucine 17–isoleucine 247. Residue glycine 49–threonine 56 participates in ATP binding.

This sequence belongs to the ABC transporter superfamily. Spermidine/putrescine importer (TC 3.A.1.11.1) family. In terms of assembly, the complex is composed of two ATP-binding proteins (PotA), two transmembrane proteins (PotB and PotC) and a solute-binding protein (PotD).

Its subcellular location is the cell membrane. The enzyme catalyses ATP + H2O + polyamine-[polyamine-binding protein]Side 1 = ADP + phosphate + polyamineSide 2 + [polyamine-binding protein]Side 1.. Its function is as follows. Part of the ABC transporter complex PotABCD involved in spermidine/putrescine import. Responsible for energy coupling to the transport system. This is Spermidine/putrescine import ATP-binding protein PotA from Mycobacterium sp. (strain KMS).